The primary structure comprises 211 residues: Phosphoribosyl-dephospho-CoA transferase (211 aa).

Catalysis depends on residues aspartate 136 and aspartate 138.

The protein belongs to the MdcG family.

It catalyses the reaction apo-[malonate decarboxylase ACP] + 2'-(5''-triphospho-alpha-D-ribosyl)-3'-dephospho-CoA = holo-[malonate decarboxylase ACP] + diphosphate. Functionally, transfers 2'-(5-triphosphoribosyl)-3'-dephosphocoenzyme-A to the apo-[acyl-carrier-protein] of the malonate decarboxylase to yield holo-[acyl-carrier-protein]. This Pseudomonas syringae pv. tomato (strain ATCC BAA-871 / DC3000) protein is Phosphoribosyl-dephospho-CoA transferase.